A 281-amino-acid chain; its full sequence is Ribosomal RNA small subunit methyltransferase A (281 aa).

Residues N36, L38, G63, E84, D109, and N127 each contribute to the S-adenosyl-L-methionine site.

The protein belongs to the class I-like SAM-binding methyltransferase superfamily. rRNA adenine N(6)-methyltransferase family. RsmA subfamily.

It is found in the cytoplasm. The enzyme catalyses adenosine(1518)/adenosine(1519) in 16S rRNA + 4 S-adenosyl-L-methionine = N(6)-dimethyladenosine(1518)/N(6)-dimethyladenosine(1519) in 16S rRNA + 4 S-adenosyl-L-homocysteine + 4 H(+). In terms of biological role, specifically dimethylates two adjacent adenosines (A1518 and A1519) in the loop of a conserved hairpin near the 3'-end of 16S rRNA in the 30S particle. May play a critical role in biogenesis of 30S subunits. In Borrelia garinii subsp. bavariensis (strain ATCC BAA-2496 / DSM 23469 / PBi) (Borreliella bavariensis), this protein is Ribosomal RNA small subunit methyltransferase A.